The following is a 366-amino-acid chain: 3-beta-hydroxysteroid dehydrogenase (366 aa).

The active-site Proton donor is Tyr154.

Belongs to the 3-beta-HSD family.

It catalyses the reaction testosterone + NAD(+) = androst-4-ene-3,17-dione + NADH + H(+). It carries out the reaction testosterone + NADP(+) = androst-4-ene-3,17-dione + NADPH + H(+). Its function is as follows. Catalyzes the degradation of testosterone into androstenedione. In Mycolicibacterium neoaurum (Mycobacterium neoaurum), this protein is 3-beta-hydroxysteroid dehydrogenase.